A 586-amino-acid chain; its full sequence is 3-hydroxy-3-methylglutaryl-coenzyme A reductase 3 (586 aa).

2 helical membrane-spanning segments follow: residues 36–59 (PSDY…FFSV) and 87–107 (ALIC…IGFV). The tract at residues 108–170 (HSFSRASTDS…STTTTSTLSD (63 aa)) is linker. Catalytic stretches follow at residues 171-586 (DDEQ…KITF) and 172-586 (DEQI…KITF). Catalysis depends on charge relay system residues E265, K397, and D473. H571 functions as the Proton donor in the catalytic mechanism. N575 is a glycosylation site (N-linked (GlcNAc...) asparagine).

The protein belongs to the HMG-CoA reductase family.

Its subcellular location is the endoplasmic reticulum membrane. It localises to the mitochondrion membrane. The protein resides in the plastid membrane. It catalyses the reaction (R)-mevalonate + 2 NADP(+) + CoA = (3S)-3-hydroxy-3-methylglutaryl-CoA + 2 NADPH + 2 H(+). It functions in the pathway metabolic intermediate biosynthesis; (R)-mevalonate biosynthesis; (R)-mevalonate from acetyl-CoA: step 3/3. Its function is as follows. Catalyzes the synthesis of mevalonate. The specific precursor of all isoprenoid compounds present in plants. The sequence is that of 3-hydroxy-3-methylglutaryl-coenzyme A reductase 3 (HMGR3) from Hevea brasiliensis (Para rubber tree).